The following is a 500-amino-acid chain: Protein FAM83F (500 aa).

A2 is subject to N-acetylalanine. A DUF1669 region spans residues 2–300 (AESQLNCLDE…LYAISEEVDL (299 aa)). Phosphoserine is present on S4. Disordered stretches follow at residues 82–109 (NARGKSKAKAKAPAPAPAESGESLAYWP), 347–366 (QQREAGGNPEGQEEGASGGE), and 391–500 (IPLG…CVIS). Residues 397-419 (SQKDGRMVSHMHRDLKPKSREAP) are compositionally biased toward basic and acidic residues. Composition is skewed to low complexity over residues 425–442 (GEAARGEAAPARRFSSRL) and 458–468 (SSVSTETSEVE). Over residues 477–500 (ENSSADISGKTSPSSAKPSNCVIS) the composition is skewed to polar residues. S479 bears the Phosphoserine mark.

It belongs to the FAM83 family. In terms of assembly, directly interacts (via DUF1669) with CSNK1A1 and CSNK1A1L.

It is found in the cell membrane. This is Protein FAM83F (FAM83F) from Homo sapiens (Human).